The following is a 428-amino-acid chain: Maltoporin 1 (428 aa).

Positions 1–25 (MTMKVKLLTTSVALALSMTAFSSNA) are cleaved as a signal peptide.

The protein belongs to the porin LamB (TC 1.B.3) family. Homotrimer formed of three 18-stranded antiparallel beta-barrels, containing three independent channels.

It localises to the cell outer membrane. It carries out the reaction beta-maltose(in) = beta-maltose(out). In terms of biological role, involved in the transport of maltose and maltodextrins. The sequence is that of Maltoporin 1 from Aeromonas salmonicida (strain A449).